An 87-amino-acid chain; its full sequence is Phosphoribosyl-ATP pyrophosphatase (87 aa).

Belongs to the PRA-PH family.

It localises to the cytoplasm. It catalyses the reaction 1-(5-phospho-beta-D-ribosyl)-ATP + H2O = 1-(5-phospho-beta-D-ribosyl)-5'-AMP + diphosphate + H(+). It functions in the pathway amino-acid biosynthesis; L-histidine biosynthesis; L-histidine from 5-phospho-alpha-D-ribose 1-diphosphate: step 2/9. This Corynebacterium glutamicum (strain ATCC 13032 / DSM 20300 / JCM 1318 / BCRC 11384 / CCUG 27702 / LMG 3730 / NBRC 12168 / NCIMB 10025 / NRRL B-2784 / 534) protein is Phosphoribosyl-ATP pyrophosphatase (hisE).